Reading from the N-terminus, the 268-residue chain is Tubulin-specific chaperone C (268 aa).

One can recognise a C-CAP/cofactor C-like domain in the interval 98–255 (PAYTTTLKKH…SAFAFEDFDI (158 aa)).

It is found in the cytoplasm. It localises to the cytoskeleton. In terms of biological role, tubulin-folding protein; involved in the early step of the tubulin folding pathway. The sequence is that of Tubulin-specific chaperone C (CIN2) from Saccharomyces cerevisiae (strain ATCC 204508 / S288c) (Baker's yeast).